Here is a 400-residue protein sequence, read N- to C-terminus: CCA-adding enzyme (400 aa).

ATP-binding residues include Gly28 and Arg31. Residues Gly28 and Arg31 each contribute to the CTP site. Residues Asp41 and Asp43 each coordinate Mg(2+). ATP contacts are provided by Arg112, Asp155, Arg158, Arg161, and Arg164. CTP is bound by residues Arg112, Asp155, Arg158, Arg161, and Arg164.

The protein belongs to the tRNA nucleotidyltransferase/poly(A) polymerase family. Bacterial CCA-adding enzyme type 3 subfamily. In terms of assembly, homodimer. It depends on Mg(2+) as a cofactor.

The catalysed reaction is a tRNA precursor + 2 CTP + ATP = a tRNA with a 3' CCA end + 3 diphosphate. It catalyses the reaction a tRNA with a 3' CCA end + 2 CTP + ATP = a tRNA with a 3' CCACCA end + 3 diphosphate. In terms of biological role, catalyzes the addition and repair of the essential 3'-terminal CCA sequence in tRNAs without using a nucleic acid template. Adds these three nucleotides in the order of C, C, and A to the tRNA nucleotide-73, using CTP and ATP as substrates and producing inorganic pyrophosphate. tRNA 3'-terminal CCA addition is required both for tRNA processing and repair. Also involved in tRNA surveillance by mediating tandem CCA addition to generate a CCACCA at the 3' terminus of unstable tRNAs. While stable tRNAs receive only 3'-terminal CCA, unstable tRNAs are marked with CCACCA and rapidly degraded. The sequence is that of CCA-adding enzyme from Staphylococcus aureus (strain MSSA476).